Reading from the N-terminus, the 578-residue chain is Putative multidrug export ATP-binding/permease protein SA1683 (578 aa).

Over 1–15 (MIKRYLQFVKPYKYR) the chain is Cytoplasmic. Residues 16–36 (IFATIIVGIIKFGIPMLIPLL) form a helical membrane-spanning segment. Positions 16–306 (IFATIIVGII…LVASFTTLTQ (291 aa)) constitute an ABC transmembrane type-1 domain. Topologically, residues 37-59 (IKYAIDGVINNHALTTDEKVHHL) are extracellular. A helical membrane pass occupies residues 60–80 (TIAIGIALFIFVIVRPPIEFI). Residues 81-138 (RQYLAQWTSNKILYDIRKKLYNHLQALSARFYANNQVGQVISRVINDVEQTKDFILTG) lie on the Cytoplasmic side of the membrane. A helical transmembrane segment spans residues 139 to 159 (LMNIWLDCITIIIALSIMFFL). The Extracellular segment spans residues 160–162 (DVK). The chain crosses the membrane as a helical span at residues 163-183 (LTLAALFIFPFYILTVYVFFG). Topologically, residues 184–244 (RLRKLTRERS…TRALKHTRWN (61 aa)) are cytoplasmic. The chain crosses the membrane as a helical span at residues 245–263 (AYSFAAINTVTDIGPIIVI). Residues 264–269 (GVGAYL) lie on the Extracellular side of the membrane. The chain crosses the membrane as a helical span at residues 270–287 (AISGSITVGTLAAFVGYL). At 288–578 (ELLFGPLRRL…YEHLYSIQNL (291 aa)) the chain is on the cytoplasmic side. Residues 340–575 (IDIDHVSFQY…QGAYEHLYSI (236 aa)) form the ABC transporter domain. Residue 374–381 (GMSGGGKS) participates in ATP binding.

Belongs to the ABC transporter superfamily. Homodimer.

The protein resides in the cell membrane. In terms of biological role, may be involved in multidrug export. Transmembrane domains (TMD) form a pore in the cell membrane and the ATP-binding domain (NBD) is responsible for energy generation. In Staphylococcus aureus (strain N315), this protein is Putative multidrug export ATP-binding/permease protein SA1683.